The following is a 640-amino-acid chain: Uromodulin (640 aa).

The N-terminal stretch at 1 to 24 (MGQPSLTWMLMVVVASWFITTAAT) is a signal peptide. The region spanning 28 to 64 (EARWCSECHSNATCTEDEAVTTCTCQEGFTGDGLTCV) is the EGF-like 1 domain. Disulfide bonds link cysteine 32–cysteine 41, cysteine 35–cysteine 50, cysteine 52–cysteine 63, cysteine 69–cysteine 83, cysteine 77–cysteine 92, cysteine 94–cysteine 106, cysteine 112–cysteine 126, cysteine 120–cysteine 135, cysteine 137–cysteine 148, cysteine 150–cysteine 161, cysteine 155–cysteine 170, cysteine 174–cysteine 267, cysteine 195–cysteine 282, cysteine 217–cysteine 255, cysteine 223–cysteine 287, cysteine 248–cysteine 256, cysteine 297–cysteine 306, cysteine 300–cysteine 315, cysteine 317–cysteine 347, cysteine 335–cysteine 425, and cysteine 366–cysteine 389. An N-linked (GlcNAc...) asparagine glycan is attached at asparagine 38. The 43-residue stretch at 65-107 (DLDECAIPGAHNCSANSSCVNTPGSFSCVCPEGFRLSPGLGCT) folds into the EGF-like 2; calcium-binding domain. Residues asparagine 76 and asparagine 80 are each glycosylated (N-linked (GlcNAc...) asparagine). An EGF-like 3; calcium-binding domain is found at 108–149 (DVDECAEPGLSHCHALATCVNVVGSYLCVCPAGYRGDGWHCE). The beta hairpin stretch occupies residues 150–171 (CSPGSCGPGLDCVPEGDALVCA). Residues 172-291 (DPCQAHRTLD…CHLAYCTDPS (120 aa)) are D10C. N-linked (GlcNAc...) (complex) asparagine glycosylation occurs at asparagine 232. An N-linked (GlcNAc...) (high mannose) asparagine glycan is attached at asparagine 275. One can recognise an EGF-like 4 domain in the interval 292 to 323 (SVEGTCEECSIDEDCKSNNGRWHCQCKQDFNI). N-linked (GlcNAc...) (complex) asparagine glycosylation is present at asparagine 322. The ZP-N stretch occupies residues 334 to 429 (ECGANDMKVS…KINFACSYPL (96 aa)). The ZP domain maps to 334–589 (ECGANDMKVS…PTCSGTRFRS (256 aa)). N-linked (GlcNAc...) (complex) asparagine glycosylation is present at asparagine 396. A flexible ZP-N/ZP-C linker; important for secretion and polymerization into filaments region spans residues 430-453 (DMKVSLKTALQPMVSALNIRVGGT). The segment at 454 to 465 (GMFTVRMALFQT) is internal hydrophobic patch (IHP). Residues 454-589 (GMFTVRMALF…PTCSGTRFRS (136 aa)) form a ZP-C region. 3 disulfide bridges follow: cysteine 506–cysteine 566, cysteine 527–cysteine 582, and cysteine 571–cysteine 578. Asparagine 513 carries N-linked (GlcNAc...) (complex) asparagine; alternate glycosylation. An N-linked (GlcNAc...) (high mannose) asparagine; alternate glycan is attached at asparagine 513. The essential for cleavage by HPN stretch occupies residues 586–589 (RFRS). The tract at residues 598–606 (VLNLGPITR) is external hydrophobic patch (EHP); regulates polymerization into filaments. Residue serine 614 is the site of GPI-anchor amidated serine attachment. Positions 615 to 640 (RAFSSLGLLKVWLPLLLSATLTLTFQ) are cleaved as a propeptide — removed in mature form.

As to quaternary structure, homodimer that then polymerizes into long filaments. The filaments can additionally assemble laterally to form a sheet. The filaments consist of a zigzag-shaped backbone with laterally protruding arms which interact with bacterial adhesin fimH. Two fimH molecules can bind to a single UMOD monomer. In terms of processing, N-glycosylated. N-glycan heterogeneity at Asn-232: Hex7HexNAc6 (major) and dHex1Hex7HexNAc6 (minor); at Asn-322: dHex1Hex6HexNAc5 (minor), dHex1Hex7HexNAc6 (major) and dHex1Hex8HexNAc7 (minor); at Asn-396: Hex6HexNAc5 (major), dHex1Hex6HexNAc5 (minor) and Hex7HexNAc6 (minor). Glycosylated Asn-232 interacts with E.coli adhesin fimH. Other complex glycosylation sites may serve as binding sites for proteins from other bacteria inclduding K.pneumoniae, P.aeruginosa and S.mitis. Proteolytically cleaved at a conserved C-terminal proteolytic cleavage site to generate the secreted form found in urine. This cleavage is catalyzed by HPN. Expressed in the tubular cells of the kidney. Most abundant protein in normal urine (at protein level). Synthesized exclusively in the kidney. Expressed exclusively by epithelial cells of the thick ascending limb of Henle's loop (TALH) and of distal convoluted tubule lumen.

It is found in the apical cell membrane. It localises to the basolateral cell membrane. The protein localises to the cell projection. The protein resides in the cilium membrane. Its subcellular location is the secreted. In terms of biological role, functions in biogenesis and organization of the apical membrane of epithelial cells of the thick ascending limb of Henle's loop (TALH), where it promotes formation of complex filamentous gel-like structure that may play a role in the water barrier permeability. May serve as a receptor for binding and endocytosis of cytokines (IL-1, IL-2) and TNF. Facilitates neutrophil migration across renal epithelia. Its function is as follows. In the urine, may contribute to colloid osmotic pressure, retards passage of positively charged electrolytes, and inhibits formation of liquid containing supersaturated salts and subsequent formation of salt crystals. Protects against urinary tract infections by binding to type 1 fimbriated E.coli. Binds to bacterial adhesin fimH which mediates the stable formation of bacterial aggregates, prevents the binding of E.coli to uroplakins UPK1A and UPK1B which act as urothelial receptors for type I fimbriae, and allows for pathogen clearance through micturation. Also promotes aggregation of other bacteria including K.pneumoniae, P.aeruginosa and S.mitis and so may also protect against other uropathogens. This Homo sapiens (Human) protein is Uromodulin (UMOD).